Consider the following 113-residue polypeptide: U11-theraphotoxin-Hhn1a (113 aa).

The first 21 residues, 1-21 (MNTVRATFLLVFVLAVSLGQA), serve as a signal peptide directing secretion. A propeptide spanning residues 22–74 (DKDENRMEMQEKTEQGKSYLDFAENLLLQKLEELEAKLLEEDSEESRNSRQKR) is cleaved from the precursor. The segment covering 60 to 69 (LEEDSEESRN) has biased composition (basic and acidic residues). Positions 60-82 (LEEDSEESRNSRQKRCIGEGVPC) are disordered. Intrachain disulfides connect C75–C90, C82–C95, and C89–C110.

Belongs to the neurotoxin 14 (magi-1) family. 01 (HNTX-16) subfamily. In terms of tissue distribution, expressed by the venom gland.

It localises to the secreted. Functionally, probable ion channel inhibitor. The protein is U11-theraphotoxin-Hhn1a of Cyriopagopus hainanus (Chinese bird spider).